The chain runs to 194 residues: FMN-dependent NADH:quinone oxidoreductase 1 (194 aa).

FMN contacts are provided by residues Ser9 and 85–88 (MYNF).

This sequence belongs to the azoreductase type 1 family. As to quaternary structure, homodimer. It depends on FMN as a cofactor.

It catalyses the reaction 2 a quinone + NADH + H(+) = 2 a 1,4-benzosemiquinone + NAD(+). The enzyme catalyses N,N-dimethyl-1,4-phenylenediamine + anthranilate + 2 NAD(+) = 2-(4-dimethylaminophenyl)diazenylbenzoate + 2 NADH + 2 H(+). Quinone reductase that provides resistance to thiol-specific stress caused by electrophilic quinones. Its function is as follows. Also exhibits azoreductase activity. Catalyzes the reductive cleavage of the azo bond in aromatic azo compounds to the corresponding amines. The protein is FMN-dependent NADH:quinone oxidoreductase 1 of Xanthomonas euvesicatoria pv. vesicatoria (strain 85-10) (Xanthomonas campestris pv. vesicatoria).